We begin with the raw amino-acid sequence, 214 residues long: Protein GrpE (214 aa).

A compositionally biased stretch (polar residues) spans M1–T13. A disordered region spans residues M1–P61. Residues Q14–A57 show a composition bias toward low complexity.

Belongs to the GrpE family. In terms of assembly, homodimer.

The protein resides in the cytoplasm. Its function is as follows. Participates actively in the response to hyperosmotic and heat shock by preventing the aggregation of stress-denatured proteins, in association with DnaK and GrpE. It is the nucleotide exchange factor for DnaK and may function as a thermosensor. Unfolded proteins bind initially to DnaJ; upon interaction with the DnaJ-bound protein, DnaK hydrolyzes its bound ATP, resulting in the formation of a stable complex. GrpE releases ADP from DnaK; ATP binding to DnaK triggers the release of the substrate protein, thus completing the reaction cycle. Several rounds of ATP-dependent interactions between DnaJ, DnaK and GrpE are required for fully efficient folding. The polypeptide is Protein GrpE (Ralstonia nicotianae (strain ATCC BAA-1114 / GMI1000) (Ralstonia solanacearum)).